The primary structure comprises 264 residues: Thiazole synthase (264 aa).

K106 acts as the Schiff-base intermediate with DXP in catalysis. 1-deoxy-D-xylulose 5-phosphate is bound by residues G167, 193–194 (AG), and 215–216 (NS).

Belongs to the ThiG family. As to quaternary structure, homotetramer. Forms heterodimers with either ThiH or ThiS.

The protein localises to the cytoplasm. The enzyme catalyses [ThiS sulfur-carrier protein]-C-terminal-Gly-aminoethanethioate + 2-iminoacetate + 1-deoxy-D-xylulose 5-phosphate = [ThiS sulfur-carrier protein]-C-terminal Gly-Gly + 2-[(2R,5Z)-2-carboxy-4-methylthiazol-5(2H)-ylidene]ethyl phosphate + 2 H2O + H(+). It participates in cofactor biosynthesis; thiamine diphosphate biosynthesis. Catalyzes the rearrangement of 1-deoxy-D-xylulose 5-phosphate (DXP) to produce the thiazole phosphate moiety of thiamine. Sulfur is provided by the thiocarboxylate moiety of the carrier protein ThiS. In vitro, sulfur can be provided by H(2)S. The polypeptide is Thiazole synthase (Pseudomonas putida (strain W619)).